The following is a 142-amino-acid chain: Transcriptional regulator MraZ (142 aa).

2 SpoVT-AbrB domains span residues 5-51 (ASSL…PRPV) and 77-120 (ASDV…DATK).

This sequence belongs to the MraZ family. Forms oligomers.

Its subcellular location is the cytoplasm. It localises to the nucleoid. This Janthinobacterium sp. (strain Marseille) (Minibacterium massiliensis) protein is Transcriptional regulator MraZ.